Reading from the N-terminus, the 1361-residue chain is MGSLKKDGEIGDEFTEALLYVNGVRRVLPDGLAHMTLLEYLRDLGLTGTKLGCGEGGCGACTVMVSSYDRKSKTSVHYAVNACLAPLYSVEGMHVISIEGLGHRKLGLHPVQESLASSHGSQCGFCTPGFIMSMYSLLRSSKNSPSEEEIEECLAGNLCRCTGYRPIVDAFRVFAKSDDALYCGVSSLSLQDGSTICPSTGKPCSCGSKTTNEVASCNEDRFQSISYSDIDGAKYTDKELIFPPELLLRKLTPLKLRGNGGITWYRPVCLQNLLELKANYPDAKLLVGNTEVGIEMRLKRLQYQVLISVAQVPELNALNVNDNGIEVGSALRLSELLRLFRKIVKERPAHETSACKAFIEQLKWFAGTQIRNVACIGGNICTASPISDLNPLWMASRAEFRITNCNGDVRSIPAKDFFLGYRKVDMGSNEILLSVFLPWTRPLEYVKEFKQAHRRDDDIAIVNGGMRVFLEDKGQQLFVSDASIAYGGVAPLSLCARKTEEFLIGKNWNKDLLQDALKVIQSDVVIKEDAPGGMVEFRKSLTLSFFFKFFLWVSHNVNNANSAIETFPPSHMSAVQPVPRLSRIGKQDYETVKQGTSVGSSEVHLSARMQVTGEAEYTDDTPVPPNTLHAAFVLSKVPHARILSIDDSAAKSSSGFVGLFLAKDIPGDNMIGPIVPDEELFATDVVTCVGQVIGVVVADTHENAKTAAGKVDVRYEELPAILSIKEAINAKSFHPNTEKRLRKGDVELCFQSGQCDRVIEGEVQMGGQEHFYLEPNGSLVWTVDGGSEVHMISSTQAPQKHQKYVSHVLGLPMSKVVCKTKRIGGGFGGKETRSAFIAAAASVPSYLLNRPVKLILDRDVDMMITGHRHSFLGKYKVGFTNEGKILALDLEIYNNGGNSLDLSLSVLERAMFHSDNVYEIPHVRIVGNVCFTNFPSNTAFRGFGGPQGMLITENWIQRIAAELNKSPEEIKEMNFQVEGSVTHYCQTLQHCTLHQLWKELKVSCNFLKARREADEFNSHNRWKKRGVAMVPTKFGISFTTKFMNQAGALVHVYTDGTVLVTHGGVEMGQGLHTKVAQVAASAFNIPLSSVFVSETSTDKVPNASPTAASASSDMYGAAVLDACEQIIARMEPVASKHNFNTFTELVSACYFQRIDLSAHGFHIVPDLGFDWISGKGNAFRYYTYGAAFAEVEIDTLTGDFHTRAADIMLDLGYSLNPAIDVGQIEGAFVQGLGWVALEELKWGDAAHKWIKPGSLLTCGPGNYKIPSINDMPFNLNVSLLKGNPNTKAIHSSKAVGEPPFFLASSVFFAIKEAIKAARTEVGLTDWFPLESPATPERIRMACFDEFSAPFVNSDFYPNLSV.

Residues 15–101 form the 2Fe-2S ferredoxin-type domain; it reads TEALLYVNGV…GMHVISIEGL (87 aa). Residues Cys-53, Cys-58, Cys-61, Cys-83, Cys-123, Cys-126, Cys-159, and Cys-161 each contribute to the [2Fe-2S] cluster site. An FAD-binding PCMH-type domain is found at 257–442; the sequence is RGNGGITWYR…LSVFLPWTRP (186 aa). Residues 285–292, Phe-365, 375–379, Asp-388, Leu-432, and Lys-450 each bind FAD; these read LLVGNTEV and CIGGN. Mo-molybdopterin is bound by residues Gln-796 and Phe-827. Substrate is bound by residues Glu-831 and Arg-909. Arg-941 is a Mo-molybdopterin binding site. Positions 943 and 1039 each coordinate substrate. Ala-1108 is a binding site for Mo-molybdopterin. Glu-1297 functions as the Proton acceptor in the catalytic mechanism.

The protein belongs to the xanthine dehydrogenase family. As to quaternary structure, homodimer. It depends on [2Fe-2S] cluster as a cofactor. Requires FAD as cofactor. The cofactor is Mo-molybdopterin. Expressed in roots, leaves, stems, flowers and siliques.

It carries out the reaction xanthine + NAD(+) + H2O = urate + NADH + H(+). The catalysed reaction is hypoxanthine + NAD(+) + H2O = xanthine + NADH + H(+). Functionally, key enzyme involved in purine catabolism. Catalyzes the oxidation of hypoxanthine to xanthine and the oxidation of xanthine to urate. Regulates the level of ureides and plays an important role during plant growth and development, senescence and response to stresses. Possesses NADH oxidase activity and may contribute to the generation of superoxide anions in planta. The polypeptide is Xanthine dehydrogenase 1 (XDH1) (Arabidopsis thaliana (Mouse-ear cress)).